Here is a 298-residue protein sequence, read N- to C-terminus: UDP-N-acetylenolpyruvoylglucosamine reductase (298 aa).

An FAD-binding PCMH-type domain is found at 27 to 191; it reads TGGNADVFVM…LDATFSLELE (165 aa). Residue arginine 170 is part of the active site. Residue serine 220 is the Proton donor of the active site. The active site involves glutamate 290.

It belongs to the MurB family. It depends on FAD as a cofactor.

It is found in the cytoplasm. It carries out the reaction UDP-N-acetyl-alpha-D-muramate + NADP(+) = UDP-N-acetyl-3-O-(1-carboxyvinyl)-alpha-D-glucosamine + NADPH + H(+). Its pathway is cell wall biogenesis; peptidoglycan biosynthesis. Functionally, cell wall formation. This Listeria innocua serovar 6a (strain ATCC BAA-680 / CLIP 11262) protein is UDP-N-acetylenolpyruvoylglucosamine reductase.